The primary structure comprises 254 residues: UPF0246 protein FTW_0267 (254 aa).

Belongs to the UPF0246 family.

The chain is UPF0246 protein FTW_0267 from Francisella tularensis subsp. tularensis (strain WY96-3418).